The following is an 827-amino-acid chain: Periplasmic nitrate reductase (827 aa).

The segment at residues 1–32 is a signal peptide (tat-type signal); sequence MELNRRDFMKANAAMAAAAAAGMTIPVKNVYA. The 4Fe-4S Mo/W bis-MGD-type domain occupies 37 to 93; it reads IRWDKAPCRFCGTGCSVLVGTKDGRVVATQGDPDAEVNRGLNCIKGYFLSKIMYGAD. The [4Fe-4S] cluster site is built by C44, C47, C51, and C79. Residues K81, Q148, N173, C177, 210 to 217, 241 to 245, M371, Q375, N481, 507 to 508, K530, D557, and 717 to 726 each bind Mo-bis(molybdopterin guanine dinucleotide); these read WGSNMAEM, STFEH, SD, and TGRVLEHWHT. F793 lines the substrate pocket. Residues N801 and K818 each contribute to the Mo-bis(molybdopterin guanine dinucleotide) site.

It belongs to the prokaryotic molybdopterin-containing oxidoreductase family. NasA/NapA/NarB subfamily. Component of the periplasmic nitrate reductase NapAB complex composed of NapA and NapB. Requires [4Fe-4S] cluster as cofactor. The cofactor is Mo-bis(molybdopterin guanine dinucleotide). Post-translationally, predicted to be exported by the Tat system. The position of the signal peptide cleavage has not been experimentally proven.

Its subcellular location is the periplasm. The catalysed reaction is 2 Fe(II)-[cytochrome] + nitrate + 2 H(+) = 2 Fe(III)-[cytochrome] + nitrite + H2O. Its function is as follows. Catalytic subunit of the periplasmic nitrate reductase complex NapAB. Receives electrons from NapB and catalyzes the reduction of nitrate to nitrite. This chain is Periplasmic nitrate reductase, found in Actinobacillus pleuropneumoniae serotype 7 (strain AP76).